The sequence spans 238 residues: Pyridoxine 5'-phosphate synthase (238 aa).

Asn7 and Arg18 together coordinate 3-amino-2-oxopropyl phosphate. His43 serves as the catalytic Proton acceptor. 1-deoxy-D-xylulose 5-phosphate-binding residues include Arg45 and His50. Glu70 functions as the Proton acceptor in the catalytic mechanism. Thr100 is a binding site for 1-deoxy-D-xylulose 5-phosphate. His190 serves as the catalytic Proton donor. 3-amino-2-oxopropyl phosphate contacts are provided by residues Asp191 and 213–214 (GH).

Belongs to the PNP synthase family. As to quaternary structure, homooctamer; tetramer of dimers.

The protein localises to the cytoplasm. It catalyses the reaction 3-amino-2-oxopropyl phosphate + 1-deoxy-D-xylulose 5-phosphate = pyridoxine 5'-phosphate + phosphate + 2 H2O + H(+). It functions in the pathway cofactor biosynthesis; pyridoxine 5'-phosphate biosynthesis; pyridoxine 5'-phosphate from D-erythrose 4-phosphate: step 5/5. Its function is as follows. Catalyzes the complicated ring closure reaction between the two acyclic compounds 1-deoxy-D-xylulose-5-phosphate (DXP) and 3-amino-2-oxopropyl phosphate (1-amino-acetone-3-phosphate or AAP) to form pyridoxine 5'-phosphate (PNP) and inorganic phosphate. In Parabacteroides distasonis (strain ATCC 8503 / DSM 20701 / CIP 104284 / JCM 5825 / NCTC 11152), this protein is Pyridoxine 5'-phosphate synthase.